We begin with the raw amino-acid sequence, 336 residues long: Electron transfer flavoprotein subunit alpha (336 aa).

275-303 (LYIACGISGAIQHLAGMQDSDYIIAINKD) is an FAD binding site.

Belongs to the ETF alpha-subunit/FixB family. Heterodimer of an alpha and a beta subunit. FAD is required as a cofactor.

The electron transfer flavoprotein serves as a specific electron acceptor for other dehydrogenases. It transfers the electrons to the main respiratory chain via ETF-ubiquinone oxidoreductase (ETF dehydrogenase). This chain is Electron transfer flavoprotein subunit alpha (etfA), found in Clostridium acetobutylicum (strain ATCC 824 / DSM 792 / JCM 1419 / IAM 19013 / LMG 5710 / NBRC 13948 / NRRL B-527 / VKM B-1787 / 2291 / W).